A 168-amino-acid chain; its full sequence is Phosphopantetheine adenylyltransferase (168 aa).

T13 is a binding site for substrate. ATP contacts are provided by residues 13 to 14 (TF) and H21. Substrate-binding residues include K45, L78, and R92. ATP-binding positions include 93–95 (GLR), E103, and 128–134 (TQFISSG).

It belongs to the bacterial CoaD family. Homohexamer. The cofactor is Mg(2+).

It is found in the cytoplasm. It carries out the reaction (R)-4'-phosphopantetheine + ATP + H(+) = 3'-dephospho-CoA + diphosphate. It functions in the pathway cofactor biosynthesis; coenzyme A biosynthesis; CoA from (R)-pantothenate: step 4/5. In terms of biological role, reversibly transfers an adenylyl group from ATP to 4'-phosphopantetheine, yielding dephospho-CoA (dPCoA) and pyrophosphate. In Wolbachia sp. subsp. Drosophila simulans (strain wRi), this protein is Phosphopantetheine adenylyltransferase.